The primary structure comprises 178 residues: ATP synthase subunit b (178 aa).

Residues 19 to 39 traverse the membrane as a helical segment; that stretch reads ITGIGFVILLFIAIKYIVPAF.

Belongs to the ATPase B chain family. F-type ATPases have 2 components, F(1) - the catalytic core - and F(0) - the membrane proton channel. F(1) has five subunits: alpha(3), beta(3), gamma(1), delta(1), epsilon(1). F(0) has three main subunits: a(1), b(2) and c(10-14). The alpha and beta chains form an alternating ring which encloses part of the gamma chain. F(1) is attached to F(0) by a central stalk formed by the gamma and epsilon chains, while a peripheral stalk is formed by the delta and b chains.

Its subcellular location is the cell membrane. Functionally, f(1)F(0) ATP synthase produces ATP from ADP in the presence of a proton or sodium gradient. F-type ATPases consist of two structural domains, F(1) containing the extramembraneous catalytic core and F(0) containing the membrane proton channel, linked together by a central stalk and a peripheral stalk. During catalysis, ATP synthesis in the catalytic domain of F(1) is coupled via a rotary mechanism of the central stalk subunits to proton translocation. Component of the F(0) channel, it forms part of the peripheral stalk, linking F(1) to F(0). This Kocuria rhizophila (strain ATCC 9341 / DSM 348 / NBRC 103217 / DC2201) protein is ATP synthase subunit b.